Here is a 289-residue protein sequence, read N- to C-terminus: G1/S-specific cyclin-D2 (289 aa).

The region spanning Val-26–Leu-151 is the Cyclin N-terminal domain. A disordered region spans residues Asp-264–Leu-289. A Phosphoserine modification is found at Ser-271. Thr-280 carries the post-translational modification Phosphothreonine.

Belongs to the cyclin family. Cyclin D subfamily. Interacts with either CDK4 or CDK6 protein kinase to form a serine/threonine kinase holoenzyme complex. The cyclin subunit imparts substrate specificity to the complex. Post-translationally, phosphorylation at Thr-280 by MAP kinases is required for ubiquitination and degradation by the DCX(AMBRA1) complex. In terms of processing, ubiquitinated by the DCX(AMBRA1) complex during the transition from G1 to S cell phase, leading to its degradation: ubiquitination is dependent on Thr-280 phosphorylation. The DCX(AMBRA1) complex represents the major regulator of CCND2 stability during the G1/S transition. Polyubiquitinated by the SCF(FBXL2) complex, leading to proteasomal degradation.

Its subcellular location is the nucleus. The protein localises to the cytoplasm. It is found in the nucleus membrane. Functionally, regulatory component of the cyclin D2-CDK4 (DC) complex that phosphorylates and inhibits members of the retinoblastoma (RB) protein family including RB1 and regulates the cell-cycle during G(1)/S transition. Phosphorylation of RB1 allows dissociation of the transcription factor E2F from the RB/E2F complex and the subsequent transcription of E2F target genes which are responsible for the progression through the G(1) phase. Hypophosphorylates RB1 in early G(1) phase. Cyclin D-CDK4 complexes are major integrators of various mitogenenic and antimitogenic signals. In Bos taurus (Bovine), this protein is G1/S-specific cyclin-D2 (CCND2).